We begin with the raw amino-acid sequence, 209 residues long: Probable glutathione peroxidase 8-A (209 aa).

The chain crosses the membrane as a helical span at residues 18 to 40 (VSVVFLSMLLCTGILCVLQLGFL). Cys79 is an active-site residue.

Belongs to the glutathione peroxidase family.

The protein localises to the membrane. It carries out the reaction 2 glutathione + H2O2 = glutathione disulfide + 2 H2O. The protein is Probable glutathione peroxidase 8-A (gpx8-a) of Xenopus laevis (African clawed frog).